A 123-amino-acid chain; its full sequence is uncharacterized protein (123 aa).

2 consecutive transmembrane segments (helical) span residues 55–77 (LLIHSYISFMLTLCFFLSLSTIL) and 92–114 (FFINIIICYKHKSSAYCVYTIVY).

The protein resides in the cell membrane. This is an uncharacterized protein from Pasteurella multocida (strain Pm70).